The primary structure comprises 278 residues: Gamma carbonic anhydrase 2, mitochondrial (278 aa).

The transit peptide at 1–43 (MGTLGRAIYTVGNWIRGTGQALDRVGSLLQGSHRIEEHLSRHR) directs the protein to the mitochondrion. Substrate-binding positions include 86 to 88 (RGD) and 101 to 102 (QD). The Zn(2+) site is built by His-107, His-130, and His-135. Asn-209 contacts substrate.

The protein belongs to the gamma-class carbonic anhydrase family. Homotrimer. Component of the mitochondrial oxidoreductase respiratory chain complex I; element of the extra matrix-exposed domain, which is attached to the membrane arm of this complex. Interacts with GAMMACAL1 and GAMMACAL2. It depends on Zn(2+) as a cofactor. In terms of tissue distribution, constitutively expressed in roots and leaves, with higher levels in flowers, particularly in tapetal tissue of anthers, inflorescence (IM) and floral meristems (FM).

The protein resides in the mitochondrion membrane. Its function is as follows. Enzyme involved in the catabolism of H(2)CO(3) but that does not mediates the reversible hydration of carbon dioxide. Mediates complex I assembly in mitochondria and respiration. Binds HCO(3)-. Required for male fertility during anther development and dehiscence to regulate the secondary thickenings of the endothecial cell wall, probably by modulating H(2)O(2)-dependent lignin polymerization. In Arabidopsis thaliana (Mouse-ear cress), this protein is Gamma carbonic anhydrase 2, mitochondrial (GAMMACA2).